Here is a 154-residue protein sequence, read N- to C-terminus: Large ribosomal subunit protein uL23y (154 aa).

The protein belongs to the universal ribosomal protein uL23 family.

Binds to a specific region on the 26S rRNA. The protein is Large ribosomal subunit protein uL23y (RPL23AB) of Arabidopsis thaliana (Mouse-ear cress).